The sequence spans 205 residues: Ras-related protein RABD1 (205 aa).

At Ser-2 the chain carries N-acetylserine. GTP-binding positions include 15-23 (GDSSVGKSC), 33-40 (YIDSYIST), 63-67 (DTAGQ), 121-124 (NKND), and 151-153 (SAK). The Effector region signature appears at 37-45 (YISTIGVDF). Composition is skewed to polar residues over residues 174-186 (GSQT…SGPG) and 194-205 (PIQQNNGGCCGQ). Residues 174-205 (GSQTNANKTSGPGTVQMKGQPIQQNNGGCCGQ) form a disordered region. Residues Cys-202 and Cys-203 are each lipidated (S-geranylgeranyl cysteine).

The protein belongs to the small GTPase superfamily. Rab family. In terms of assembly, does not interact with GC5. Interacts with XI-2/MYA2.

The protein resides in the golgi apparatus. It localises to the trans-Golgi network membrane. It is found in the golgi apparatus membrane. Functionally, protein transport. Regulator of membrane traffic from the Golgi apparatus towards the endoplasmic reticulum (ER). This chain is Ras-related protein RABD1 (RABD1), found in Arabidopsis thaliana (Mouse-ear cress).